We begin with the raw amino-acid sequence, 207 residues long: NAD(P)H dehydrogenase (quinone) (207 aa).

Residues 3-194 (VQIIFYSMYG…EMAKFQGRHV (192 aa)) enclose the Flavodoxin-like domain. FMN is bound by residues 9–14 (SMYGHI) and 82–84 (TRF). Residue Tyr-11 participates in NAD(+) binding. Trp-102 is a binding site for substrate. FMN is bound by residues 117–123 (STATQHG) and His-138.

This sequence belongs to the WrbA family. FMN serves as cofactor.

It catalyses the reaction a quinone + NADH + H(+) = a quinol + NAD(+). It carries out the reaction a quinone + NADPH + H(+) = a quinol + NADP(+). The sequence is that of NAD(P)H dehydrogenase (quinone) from Aromatoleum aromaticum (strain DSM 19018 / LMG 30748 / EbN1) (Azoarcus sp. (strain EbN1)).